Here is a 101-residue protein sequence, read N- to C-terminus: Aspartyl/glutamyl-tRNA(Asn/Gln) amidotransferase subunit C (101 aa).

A disordered region spans residues glutamine 75–serine 101. Positions glutamate 85 to serine 101 are enriched in basic and acidic residues.

The protein belongs to the GatC family. Heterotrimer of A, B and C subunits.

It catalyses the reaction L-glutamyl-tRNA(Gln) + L-glutamine + ATP + H2O = L-glutaminyl-tRNA(Gln) + L-glutamate + ADP + phosphate + H(+). It carries out the reaction L-aspartyl-tRNA(Asn) + L-glutamine + ATP + H2O = L-asparaginyl-tRNA(Asn) + L-glutamate + ADP + phosphate + 2 H(+). Functionally, allows the formation of correctly charged Asn-tRNA(Asn) or Gln-tRNA(Gln) through the transamidation of misacylated Asp-tRNA(Asn) or Glu-tRNA(Gln) in organisms which lack either or both of asparaginyl-tRNA or glutaminyl-tRNA synthetases. The reaction takes place in the presence of glutamine and ATP through an activated phospho-Asp-tRNA(Asn) or phospho-Glu-tRNA(Gln). In Salinispora arenicola (strain CNS-205), this protein is Aspartyl/glutamyl-tRNA(Asn/Gln) amidotransferase subunit C.